Here is a 2566-residue protein sequence, read N- to C-terminus: Zinc finger protein GLI1 (2566 aa).

3 disordered regions span residues 349–375 (HHSS…SQSS), 430–508 (DIRR…RSTG), and 985–1046 (KSIE…GDPD). Composition is skewed to polar residues over residues 434-444 (TLSSNGNSSHT) and 457-492 (WSPN…YQQH). Positions 493–508 (SGYTSTSGSSGNRSTG) are enriched in low complexity. Residues 993–1016 (WQNQNVFSSRRNSTRDPSNNNNSG) are compositionally biased toward polar residues. The span at 1023 to 1035 (DEPDVDDDEELDD) shows a compositional bias: acidic residues. The C2H2-type 1; degenerate zinc-finger motif lies at 1088–1110 (RECVRGTRPFKAQYMLVVHMRRH). 3 C2H2-type zinc fingers span residues 1116-1140 (HKCI…LRSH), 1146-1171 (YQCE…NRTH), and 1177-1202 (YTCK…KTVH). Disordered regions lie at residues 1254–1313 (GNSN…PRDS), 1465–1491 (LSTT…TKQK), 1650–1677 (SKNM…NQNE), 1727–1791 (AAAS…MDND), and 2067–2091 (MHFS…NRPH). Low complexity-rich tracts occupy residues 1661–1677 (NNNE…NQNE) and 1727–1743 (AAAS…TTAS). The segment covering 1752-1769 (NHHHQKQQPKHSHQHQNR) has biased composition (basic residues). Polar residues predominate over residues 1770 to 1791 (TKSINSDNNYSNQDNVSTMDND). Low complexity predominate over residues 2070–2090 (SPHSYVHSSSSNSSPFNSNRP).

It belongs to the GLI C2H2-type zinc-finger protein family. Expressed in female-paired or unpaired males along the ventral surface in neurons and skin tegument cells. In virgin and mature females, expressed bilaterally along the edges of the body in neurons. In mature females, also expressed in skin tegument cells.

The protein resides in the nucleus. Its function is as follows. Probable transcription factor which plays an essential role in males to trigger female sexual development by inducing NRPS expression in male. NRPS produces the pheromone beta-alanyl-tryptamine (BATT), which stimulates female sexual development. This is Zinc finger protein GLI1 from Schistosoma mansoni (Blood fluke).